The following is a 396-amino-acid chain: Elongation factor Tu (396 aa).

The tr-type G domain occupies 10-206 (KPHCNIGTIG…AVDAYIPQPE (197 aa)). The segment at 19-26 (GHVDHGKT) is G1. Residue 19–26 (GHVDHGKT) participates in GTP binding. Thr26 contributes to the Mg(2+) binding site. The tract at residues 60-64 (GITIS) is G2. The G3 stretch occupies residues 81–84 (DCPG). Residues 81-85 (DCPGH) and 136-139 (NKVD) each bind GTP. The tract at residues 136 to 139 (NKVD) is G4. The G5 stretch occupies residues 174–176 (SAL).

This sequence belongs to the TRAFAC class translation factor GTPase superfamily. Classic translation factor GTPase family. EF-Tu/EF-1A subfamily. As to quaternary structure, monomer.

It is found in the cytoplasm. It catalyses the reaction GTP + H2O = GDP + phosphate + H(+). Functionally, GTP hydrolase that promotes the GTP-dependent binding of aminoacyl-tRNA to the A-site of ribosomes during protein biosynthesis. The chain is Elongation factor Tu from Parvibaculum lavamentivorans (strain DS-1 / DSM 13023 / NCIMB 13966).